A 266-amino-acid chain; its full sequence is F-actin-capping protein subunit beta (266 aa).

The protein belongs to the F-actin-capping protein beta subunit family. Component of the F-actin capping complex, composed of a heterodimer of an alpha and a beta subunit.

The protein localises to the cytoplasm. Its subcellular location is the cytoskeleton. The protein resides in the actin patch. In terms of biological role, F-actin-capping proteins bind in a Ca(2+)-independent manner to the fast growing ends of actin filaments (barbed end) thereby blocking the exchange of subunits at these ends. Unlike other capping proteins (such as gelsolin and severin), these proteins do not sever actin filaments. The chain is F-actin-capping protein subunit beta (cap2) from Aspergillus oryzae (strain ATCC 42149 / RIB 40) (Yellow koji mold).